The primary structure comprises 290 residues: S-methyl-5'-thioadenosine phosphorylase 2 (290 aa).

Residues serine 14, 57–58 (RH), and 90–91 (SA) each bind phosphate. Methionine 185 is a binding site for substrate. Residue serine 186 coordinates phosphate. Residue 209–211 (DYD) participates in substrate binding.

This sequence belongs to the PNP/MTAP phosphorylase family. MTAP subfamily. As to quaternary structure, homotrimer.

Its subcellular location is the cytoplasm. The protein resides in the nucleus. The enzyme catalyses S-methyl-5'-thioadenosine + phosphate = 5-(methylsulfanyl)-alpha-D-ribose 1-phosphate + adenine. Its pathway is amino-acid biosynthesis; L-methionine biosynthesis via salvage pathway; S-methyl-5-thio-alpha-D-ribose 1-phosphate from S-methyl-5'-thioadenosine (phosphorylase route): step 1/1. Its function is as follows. Catalyzes the reversible phosphorylation of S-methyl-5'-thioadenosine (MTA) to adenine and 5-methylthioribose-1-phosphate. Involved in the breakdown of MTA, a major by-product of polyamine biosynthesis. Responsible for the first step in the methionine salvage pathway after MTA has been generated from S-adenosylmethionine. Has broad substrate specificity with 6-aminopurine nucleosides as preferred substrates. The chain is S-methyl-5'-thioadenosine phosphorylase 2 from Puccinia graminis f. sp. tritici (strain CRL 75-36-700-3 / race SCCL) (Black stem rust fungus).